A 65-amino-acid polypeptide reads, in one-letter code: Large ribosomal subunit protein bL35 (65 aa).

Disordered regions lie at residues 1 to 23 and 29 to 48; these read MPKI…GKVK and GSHI…RQSH. Positions 33–43 are enriched in basic residues; it reads LAKKSRKRKRD.

The protein belongs to the bacterial ribosomal protein bL35 family.

The chain is Large ribosomal subunit protein bL35 from Desulfatibacillum aliphaticivorans.